The sequence spans 415 residues: Dynein assembly factor with WD repeat domains 1 (415 aa).

WD repeat units follow at residues 90 to 129, 132 to 174, 175 to 214, 217 to 256, 259 to 298, 301 to 340, 343 to 384, and 386 to 415; these read AHIL…ELNT, GHRN…HTFR, GHTA…EVYT, GHSA…KVNI, GHCA…CVAT, GHDD…CIAK, GHEG…QVLE, and HTDE…RIWR.

The protein belongs to the WD repeat WDR69 family. In terms of assembly, interacts with IFT46.

It is found in the cytoplasm. The protein resides in the cytoskeleton. Its subcellular location is the flagellum basal body. It localises to the flagellum axoneme. Required for axonemal dynein assembly and ciliary motility in ciliated organs, including Kupffer's vesicle, during embryogenesis. Facilitates the onset of robust cilia motility during development. The protein is Dynein assembly factor with WD repeat domains 1 of Homo sapiens (Human).